Reading from the N-terminus, the 452-residue chain is uncharacterized protein (452 aa).

Its subcellular location is the cytoplasm. It localises to the nucleus. This is an uncharacterized protein from Schizosaccharomyces pombe (strain 972 / ATCC 24843) (Fission yeast).